Consider the following 444-residue polypeptide: Glutamyl-tRNA reductase (444 aa).

Substrate is bound by residues 49-52, serine 109, 114-116, and glutamine 120; these read TCNR and ETQ. Catalysis depends on cysteine 50, which acts as the Nucleophile. 189-194 is a binding site for NADP(+); the sequence is GAGKMS. Residues 425-444 form a disordered region; the sequence is KPKKQPAPAGIKEPVLAKKG.

The protein belongs to the glutamyl-tRNA reductase family. In terms of assembly, homodimer.

It carries out the reaction (S)-4-amino-5-oxopentanoate + tRNA(Glu) + NADP(+) = L-glutamyl-tRNA(Glu) + NADPH + H(+). It functions in the pathway porphyrin-containing compound metabolism; protoporphyrin-IX biosynthesis; 5-aminolevulinate from L-glutamyl-tRNA(Glu): step 1/2. Catalyzes the NADPH-dependent reduction of glutamyl-tRNA(Glu) to glutamate 1-semialdehyde (GSA). This chain is Glutamyl-tRNA reductase, found in Pelotomaculum thermopropionicum (strain DSM 13744 / JCM 10971 / SI).